A 102-amino-acid chain; its full sequence is Putative pterin-4-alpha-carbinolamine dehydratase (102 aa).

The protein belongs to the pterin-4-alpha-carbinolamine dehydratase family.

It catalyses the reaction (4aS,6R)-4a-hydroxy-L-erythro-5,6,7,8-tetrahydrobiopterin = (6R)-L-erythro-6,7-dihydrobiopterin + H2O. The chain is Putative pterin-4-alpha-carbinolamine dehydratase from Burkholderia ambifaria (strain MC40-6).